A 206-amino-acid polypeptide reads, in one-letter code: Holliday junction branch migration complex subunit RuvA (206 aa).

Residues 1-67 (MIASIFGKIT…QILEEGFAFN (67 aa)) are domain I. The interval 68-141 (TLEEKEWFSK…YDRDDGGKRI (74 aa)) is domain II. The flexible linker stretch occupies residues 141–145 (IKPNT). Residues 146 to 206 (AMANDYDEMF…QNNEVTNKTA (61 aa)) form a domain III region.

The protein belongs to the RuvA family. In terms of assembly, homotetramer. Forms an RuvA(8)-RuvB(12)-Holliday junction (HJ) complex. HJ DNA is sandwiched between 2 RuvA tetramers; dsDNA enters through RuvA and exits via RuvB. An RuvB hexamer assembles on each DNA strand where it exits the tetramer. Each RuvB hexamer is contacted by two RuvA subunits (via domain III) on 2 adjacent RuvB subunits; this complex drives branch migration. In the full resolvosome a probable DNA-RuvA(4)-RuvB(12)-RuvC(2) complex forms which resolves the HJ.

The protein localises to the cytoplasm. The RuvA-RuvB-RuvC complex processes Holliday junction (HJ) DNA during genetic recombination and DNA repair, while the RuvA-RuvB complex plays an important role in the rescue of blocked DNA replication forks via replication fork reversal (RFR). RuvA specifically binds to HJ cruciform DNA, conferring on it an open structure. The RuvB hexamer acts as an ATP-dependent pump, pulling dsDNA into and through the RuvAB complex. HJ branch migration allows RuvC to scan DNA until it finds its consensus sequence, where it cleaves and resolves the cruciform DNA. This Mycoplasma pneumoniae (strain ATCC 29342 / M129 / Subtype 1) (Mycoplasmoides pneumoniae) protein is Holliday junction branch migration complex subunit RuvA.